The primary structure comprises 407 residues: Argininosuccinate synthase (407 aa).

ATP contacts are provided by residues 16 to 24 and Ala44; that span reads AYSGGLDTS. 2 residues coordinate L-citrulline: Tyr96 and Ser101. Gly126 is an ATP binding site. L-aspartate contacts are provided by Thr128, Asn132, and Asp133. An L-citrulline-binding site is contributed by Asn132. Arg136, Ser185, Ser194, Glu270, and Tyr282 together coordinate L-citrulline.

It belongs to the argininosuccinate synthase family. Type 1 subfamily. In terms of assembly, homotetramer.

The protein resides in the cytoplasm. It carries out the reaction L-citrulline + L-aspartate + ATP = 2-(N(omega)-L-arginino)succinate + AMP + diphosphate + H(+). It functions in the pathway amino-acid biosynthesis; L-arginine biosynthesis; L-arginine from L-ornithine and carbamoyl phosphate: step 2/3. The polypeptide is Argininosuccinate synthase (Shewanella denitrificans (strain OS217 / ATCC BAA-1090 / DSM 15013)).